The sequence spans 3312 residues: Cadherin EGF LAG seven-pass G-type receptor 3 (3312 aa).

Positions 1–32 are cleaved as a signal peptide; the sequence is MMARRPPWRGLGGRSTPILLLLLLSLFPLSQE. The Extracellular segment spans residues 33–2540; that stretch reads ELGGGGHQGW…RLEGDLELLA (2508 aa). 3 disordered regions span residues 90–112, 143–199, and 212–306; these read GRRQ…LGIE, GRTG…RKRV, and GSKG…EARK. Over residues 159-173 the composition is skewed to low complexity; that stretch reads SSGVPGSGNSSPLPS. A compositionally biased stretch (pro residues) spans 290–299; the sequence is RPGPRPPGLP. 9 consecutive Cadherin domains span residues 326-433, 434-545, 546-651, 652-756, 757-858, 859-961, 962-1067, 1068-1169, and 1170-1265; these read PQYN…SPVF, EQAQ…APQF, SEKR…IPIF, VSTP…RPEF, TMKE…RPVF, QSAH…APQF, VASH…APVF, PAEE…SPVL, and NNFQ…RVVI. The N-linked (GlcNAc...) asparagine glycan is linked to Asn632. Asn847 carries an N-linked (GlcNAc...) asparagine glycan. 4 N-linked (GlcNAc...) asparagine glycosylation sites follow: Asn1182, Asn1222, Asn1317, and Asn1327. Residues 1375 to 1433 enclose the EGF-like 1; calcium-binding domain; that stretch reads DDNVCLREPCENYMKCVSVLRFDSSAPFLASASTLFRPIQPIAGLRCRCPPGFTGDFCE. Disulfide bonds link Cys1379–Cys1390, Cys1384–Cys1421, Cys1423–Cys1432, Cys1439–Cys1450, Cys1444–Cys1459, Cys1461–Cys1470, Cys1479–Cys1490, Cys1484–Cys1500, and Cys1502–Cys1513. The EGF-like 2; calcium-binding domain maps to 1435–1471; it reads ELDLCYSNPCRNGGACARREGGYTCVCRPRFTGEDCE. The EGF-like 3; calcium-binding domain maps to 1475–1514; it reads EAGRCVPGVCRNGGTCTDAPNGGFRCQCPAGGAFEGPRCE. In terms of domain architecture, Laminin G-like 1 spans 1515–1719; sequence VAARSFPPSS…VANNGTMAGC (205 aa). Residues Asn1649 and Asn1713 are each glycosylated (N-linked (GlcNAc...) asparagine). Disulfide bonds link Cys1693-Cys1719, Cys1726-Cys1737, Cys1731-Cys1746, and Cys1748-Cys1757. The EGF-like 4; calcium-binding domain maps to 1722–1758; sequence KLHFCDSGPCKNSGFCSERWGSFSCDCPVGFGGKDCQ. The region spanning 1764-1944 is the Laminin G-like 2 domain; sequence PHHFRGNGTL…SHRVNAEPGC (181 aa). Asn1770 is a glycosylation site (N-linked (GlcNAc...) asparagine). 9 cysteine pairs are disulfide-bonded: Cys1915–Cys1944, Cys1950–Cys1961, Cys1955–Cys1970, Cys1972–Cys1981, Cys1985–Cys1996, Cys1990–Cys2008, Cys2010–Cys2019, Cys2027–Cys2040, and Cys2042–Cys2052. The 37-residue stretch at 1946 to 1982 folds into the EGF-like 5; calcium-binding domain; it reads VTNACASGPCPPHADCRDLWQTFSCTCQPGYYGPGCV. A (3R)-3-hydroxyaspartate modification is found at Asp1963. An EGF-like 6; calcium-binding domain is found at 1983 to 2020; sequence DACLLNPCQNQGSCRHLPGAPHGYTCDCVGGYFGHHCE. Positions 2021-2053 constitute an EGF-like 7; calcium-binding domain; the sequence is HRMDQQCPRGWWGSPTCGPCNCDVHKGFDPNCN. N-linked (GlcNAc...) asparagine glycosylation is present at Asn2053. Positions 2055–2090 constitute an EGF-like 8; calcium-binding domain; it reads TNGQCHCKEFHYRPRGSDSCLPCDCYPVGSTSRSCA. 5 disulfide bridges follow: Cys2059–Cys2074, Cys2061–Cys2077, Cys2079–Cys2089, Cys2098–Cys2107, and Cys2110–Cys2122. Residues 2077-2124 form the Laminin EGF-like domain; the sequence is CDCYPVGSTSRSCAPHSGQCPCRPGALGRQCNSCDSPFAEVTASGCRV. A Phosphotyrosine modification is found at Tyr2126. 5 N-linked (GlcNAc...) asparagine glycosylation sites follow: Asn2177, Asn2196, Asn2386, Asn2474, and Asn2506. The tract at residues 2361–2399 is disordered; that stretch reads THVLLPSQSPRPSPSEVLPTSSSIENSTTSSVVPPPAPP. The GAIN-B domain maps to 2368–2530; sequence QSPRPSPSEV…GVLMDASPRE (163 aa). Low complexity predominate over residues 2380–2391; sequence TSSSIENSTTSS. 2 disulfide bridges follow: Cys2480–Cys2512 and Cys2500–Cys2514. The interval 2480–2530 is GPS; the sequence is CVQWDPPGLAEQHGVWTARDCELVHRNGSHARCRCSRTGTFGVLMDASPRE. The helical transmembrane segment at 2541–2561 threads the bilayer; it reads VFTHVVVAVSVAALVLTAAIL. At 2562-2572 the chain is on the cytoplasmic side; sequence LSLRSLKSNVR. A helical transmembrane segment spans residues 2573–2593; sequence GIHANVAAALGVAELLFLLGI. Residues 2594 to 2601 lie on the Extracellular side of the membrane; the sequence is HRTHNQLV. A helical membrane pass occupies residues 2602 to 2622; it reads CTAVAILLHYFFLSTFAWLFV. The Cytoplasmic portion of the chain corresponds to 2623-2643; sequence QGLHLYRMQVEPRNVDRGAMR. Residues 2644–2664 traverse the membrane as a helical segment; sequence FYHALGWGVPAVLLGLAVGLD. The Extracellular portion of the chain corresponds to 2665 to 2681; sequence PEGYGNPDFCWISVHEP. The chain crosses the membrane as a helical span at residues 2682 to 2702; the sequence is LIWSFAGPVVLVIVMNGTMFL. Over 2703–2725 the chain is Cytoplasmic; sequence LAARTSCSTGQREAKKTSALTLR. The helical transmembrane segment at 2726–2746 threads the bilayer; the sequence is SSFLLLLLVSASWLFGLLAVN. Residues 2747-2753 are Extracellular-facing; the sequence is HSILAFH. A helical membrane pass occupies residues 2754–2774; it reads YLHAGLCGLQGLAVLLLFCVL. Residues 2775-3312 are Cytoplasmic-facing; sequence NADARAAWMP…SEVPRSEGHS (538 aa). Disordered regions lie at residues 2888-2927 and 2978-3006; these read AGAD…QRPL and TSKD…AQRQ. Acidic residues predominate over residues 2890–2900; it reads ADSDSDSDLSL. Tyr3051 is subject to Phosphotyrosine. Disordered stretches follow at residues 3086–3243 and 3256–3312; these read EEAP…TEQL and SALS…EGHS. Position 3097 is a phosphoserine (Ser3097). Composition is skewed to low complexity over residues 3175–3198, 3256–3265, and 3272–3281; these read SPQR…SRSS, SALSSVQSSS, and TTATPSATAS. The segment covering 3287–3300 has biased composition (polar residues); that stretch reads TPRSATSHSISELS.

It belongs to the G-protein coupled receptor 2 family. LN-TM7 subfamily.

Its subcellular location is the cell membrane. Its function is as follows. Receptor that may have an important role in cell/cell signaling during nervous system formation. This chain is Cadherin EGF LAG seven-pass G-type receptor 3 (CELSR3), found in Homo sapiens (Human).